Reading from the N-terminus, the 714-residue chain is Polyribonucleotide nucleotidyltransferase (714 aa).

The Mg(2+) site is built by aspartate 484 and aspartate 490. A KH domain is found at 551 to 610 (PRIMVINIAPEKVREVIGPGGKVINKIIDETGVKIDTEDDGKITVAGENTESAQRAIDMI). One can recognise an S1 motif domain in the interval 620–688 (GEKYLGRVTK…DQGKMTLSRK (69 aa)). A disordered region spans residues 685–714 (LSRKALLPKPERKEKKNFDKKSEDQNSEDK). Over residues 693-714 (KPERKEKKNFDKKSEDQNSEDK) the composition is skewed to basic and acidic residues.

This sequence belongs to the polyribonucleotide nucleotidyltransferase family. It depends on Mg(2+) as a cofactor.

The protein resides in the cytoplasm. It carries out the reaction RNA(n+1) + phosphate = RNA(n) + a ribonucleoside 5'-diphosphate. Functionally, involved in mRNA degradation. Catalyzes the phosphorolysis of single-stranded polyribonucleotides processively in the 3'- to 5'-direction. The sequence is that of Polyribonucleotide nucleotidyltransferase from Finegoldia magna (strain ATCC 29328 / DSM 20472 / WAL 2508) (Peptostreptococcus magnus).